The chain runs to 327 residues: Serum response factor homolog (327 aa).

Residues 12 to 43 (QKLQNASPALPEGTSSTPTPSSSTGLLPNGKK) are disordered. Positions 25–35 (TSSTPTPSSST) are enriched in low complexity. The 61-residue stretch at 45–105 (KGRVKIKMEY…GHVYTYATPK (61 aa)) folds into the MADS-box domain. A disordered region spans residues 189-225 (TFGEDDYNNDESGDDSDSEEASSDIKEEYQGSPTMVK). A compositionally biased stretch (acidic residues) spans 191–210 (GEDDYNNDESGDDSDSEEAS).

In terms of tissue distribution, expressed in muscle, varying with age, decreasing twofold during the first week of adulthood.

The protein resides in the nucleus. Functionally, transcription factor. Regulates myogenesis, in cooperation with transcription factors hlh-1 and hnd-1. Required for maintenance of muscle in adulthood. The polypeptide is Serum response factor homolog (Caenorhabditis elegans).